A 361-amino-acid polypeptide reads, in one-letter code: Cell cycle control protein 50A (361 aa).

The tract at residues 1 to 28 (MAMNYNAKDEVDGGPPCPPGGTAKTRRP) is disordered. Residue Ala2 is modified to N-acetylalanine. The required for ATPase and aminophospholipid flippase activity stretch occupies residues 2-48 (AMNYNAKDEVDGGPPCPPGGTAKTRRPDNTAFKQQRLPAWQPILTAG). Over 2–49 (AMNYNAKDEVDGGPPCPPGGTAKTRRPDNTAFKQQRLPAWQPILTAGT) the chain is Cytoplasmic. The segment at 49-348 (TVLPTFFIIG…LGVVLLVINH (300 aa)) is interaction with ATP8A2. A helical transmembrane segment spans residues 50–70 (VLPTFFIIGLIFIPIGIGIFV). The Exoplasmic loop segment spans residues 71–325 (TSNNIREIEI…SWMGGKNPFL (255 aa)). Disulfide bonds link Cys91/Cys104, Cys94/Cys102, and Cys157/Cys171. N-linked (GlcNAc...) asparagine glycans are attached at residues Asn180, Asn190, and Asn294. The chain crosses the membrane as a helical span at residues 326–346 (GIAYITIGSISFLLGVVLLVI). The Cytoplasmic segment spans residues 347–361 (NHKYRNSSNTADITI).

The protein belongs to the CDC50/LEM3 family. Component of various P4-ATPase flippase complexes which consists of a catalytic alpha subunit and an accessory beta subunit. Interacts with ATP8A1 to form a flippase complex; this complex forms an intermediate phosphoenzyme. Interacts with ATP8A2 to form a flippase complex. ATP8B1:TMEM30A and ATP8B2:TMEM30A flippase complexes have been shown to form intermediate phosphoenzymes in vitro. Interacts with alpha subunits ATP8A1, ATP8B1, ATP8B2, ATP8B4, ATP10A, ATP10B, ATP10D, ATP11A, ATP11B and ATP11C. N-glycosylated; contributes to ATP8A2:TMEM30A flippase complex assembly but not to functional activity. As to expression, expressed in photoreceptor cells; detected in retina outer segment and other retinal layers (at protein level).

The protein localises to the membrane. It is found in the golgi apparatus. Its subcellular location is the cytoplasmic vesicle. The protein resides in the secretory vesicle membrane. It localises to the apical cell membrane. The protein localises to the photoreceptor inner segment. It is found in the cell projection. Its subcellular location is the cilium. The protein resides in the photoreceptor outer segment. Accessory component of a P4-ATPase flippase complex which catalyzes the hydrolysis of ATP coupled to the transport of aminophospholipids from the outer to the inner leaflet of various membranes and ensures the maintenance of asymmetric distribution of phospholipids. Phospholipid translocation also seems to be implicated in vesicle formation and in uptake of lipid signaling molecules. The beta subunit may assist in binding of the phospholipid substrate. Required for the proper folding, assembly and ER to Golgi exit of the ATP8A2:TMEM30A flippase complex. ATP8A2:TMEM30A may be involved in regulation of neurite outgrowth, and, reconstituted to liposomes, predomiminantly transports phosphatidylserine (PS) and to a lesser extent phosphatidylethanolamine (PE). The ATP8A1:TMEM30A flippase complex seems to play a role in regulation of cell migration probably involving flippase-mediated translocation of phosphatidylethanolamine (PE) at the plasma membrane. Required for the formation of the ATP8A2, ATP8B1 and ATP8B2 P-type ATPAse intermediate phosphoenzymes. Involved in uptake of platelet-activating factor (PAF). Can also mediate the export of alpha subunits ATP8A1, ATP8B1, ATP8B2, ATP8B4, ATP10A, ATP10B, ATP10D, ATP11A, ATP11B and ATP11C from the ER to other membrane localizations. The chain is Cell cycle control protein 50A from Bos taurus (Bovine).